The sequence spans 1917 residues: Diacylglycerol kinase eta (1917 aa).

The segment covering 1 to 10 (MSHLKLDTLH) has biased composition (basic and acidic residues). Residues 1 to 37 (MSHLKLDTLHVQRSPRGSRRSSRSSGRSSACSSGSIS) form a disordered region. Over residues 23–37 (RSSGRSSACSSGSIS) the composition is skewed to low complexity. Positions 82–175 (AIIKEGFLLK…WLGSLKTATA (94 aa)) constitute a PH domain. 2 consecutive Phorbol-ester/DAG-type zinc fingers follow at residues 195–245 (HHHW…IANC) and 268–319 (PHQW…AVAC). The DAGKc domain occupies 350 to 486 (GNFSPLLVFV…DRWSIMVFEK (137 aa)). Disordered stretches follow at residues 1015-1053 (TTLCSEHAGPPKPPRKKSLSALSRTQAHPRRRNSSPPRI), 1114-1149 (LEQQQRDGDNDTEYPEQQQTPTNKGPNSLATTSEDE), and 1380-1399 (KDKDEKGGKDKDKTPTEETN). Positions 1128–1145 (PEQQQTPTNKGPNSLATT) are enriched in polar residues. In terms of domain architecture, SAM spans 1854-1917 (WSVNEVVTWL…LQAIKDLSEN (64 aa)).

It belongs to the eukaryotic diacylglycerol kinase family.

Its subcellular location is the cytoplasm. The catalysed reaction is a 1,2-diacyl-sn-glycerol + ATP = a 1,2-diacyl-sn-glycero-3-phosphate + ADP + H(+). In terms of biological role, phosphorylates diacylglycerol (DAG) to generate phosphatidic acid (PA). The chain is Diacylglycerol kinase eta from Drosophila yakuba (Fruit fly).